Consider the following 349-residue polypeptide: tRNA pseudouridine synthase D (349 aa).

A disordered region spans residues 1–22; that stretch reads MTDAPLVTAELPGSGGSLRRSP. The Nucleophile role is filled by Asp-78. The 155-residue stretch at 150-304 folds into the TRUD domain; that stretch reads GLPNLFGPQR…AEGTRRAARL (155 aa).

Belongs to the pseudouridine synthase TruD family.

The catalysed reaction is uridine(13) in tRNA = pseudouridine(13) in tRNA. In terms of biological role, responsible for synthesis of pseudouridine from uracil-13 in transfer RNAs. The chain is tRNA pseudouridine synthase D from Anaeromyxobacter sp. (strain Fw109-5).